Reading from the N-terminus, the 311-residue chain is Ciliary microtubule inner protein 2B (311 aa).

2 disordered regions span residues Pro64–Pro93 and Gln150–Met183.

It belongs to the CIMIP2 family. Expressed in airway epithelial cells.

The protein resides in the cytoplasm. Its subcellular location is the cytoskeleton. The protein localises to the cilium axoneme. Its function is as follows. Microtubule inner protein (MIP) part of the dynein-decorated doublet microtubules (DMTs) in cilia axoneme, which is required for motile cilia beating. The sequence is that of Ciliary microtubule inner protein 2B (cimip2b) from Xenopus laevis (African clawed frog).